The chain runs to 46 residues: Cytochrome b559 subunit beta (46 aa).

The chain crosses the membrane as a helical span at residues 21–37; sequence WLALHTLGIPTVFFLGA. His25 is a binding site for heme.

It belongs to the PsbE/PsbF family. Heterodimer of an alpha subunit and a beta subunit. PSII is composed of 1 copy each of membrane proteins PsbA, PsbB, PsbC, PsbD, PsbE, PsbF, PsbH, PsbI, PsbJ, PsbK, PsbL, PsbM, PsbT, PsbX, PsbY, PsbZ, Psb30/Ycf12, peripheral proteins PsbO, CyanoQ (PsbQ), PsbU, PsbV and a large number of cofactors. It forms dimeric complexes. Requires heme b as cofactor.

The protein resides in the cellular thylakoid membrane. In terms of biological role, this b-type cytochrome is tightly associated with the reaction center of photosystem II (PSII). PSII is a light-driven water:plastoquinone oxidoreductase that uses light energy to abstract electrons from H(2)O, generating O(2) and a proton gradient subsequently used for ATP formation. It consists of a core antenna complex that captures photons, and an electron transfer chain that converts photonic excitation into a charge separation. The sequence is that of Cytochrome b559 subunit beta from Synechococcus sp. (strain CC9605).